Reading from the N-terminus, the 220-residue chain is Pyridoxine/pyridoxamine 5'-phosphate oxidase (220 aa).

FMN is bound by residues 69 to 74, 84 to 85, R90, K91, and Q113; these read RVVLLK and YT. K74 is a binding site for substrate. Substrate-binding residues include Y131, R135, and S139. FMN-binding positions include 148-149 and W193; that span reads QS. 199 to 201 is a binding site for substrate; sequence RLH. Position 203 (R203) interacts with FMN.

The protein belongs to the pyridoxamine 5'-phosphate oxidase family. In terms of assembly, homodimer. Requires FMN as cofactor.

It catalyses the reaction pyridoxamine 5'-phosphate + O2 + H2O = pyridoxal 5'-phosphate + H2O2 + NH4(+). The catalysed reaction is pyridoxine 5'-phosphate + O2 = pyridoxal 5'-phosphate + H2O2. It functions in the pathway cofactor metabolism; pyridoxal 5'-phosphate salvage; pyridoxal 5'-phosphate from pyridoxamine 5'-phosphate: step 1/1. The protein operates within cofactor metabolism; pyridoxal 5'-phosphate salvage; pyridoxal 5'-phosphate from pyridoxine 5'-phosphate: step 1/1. In terms of biological role, catalyzes the oxidation of either pyridoxine 5'-phosphate (PNP) or pyridoxamine 5'-phosphate (PMP) into pyridoxal 5'-phosphate (PLP). This Myxococcus xanthus protein is Pyridoxine/pyridoxamine 5'-phosphate oxidase.